Here is a 409-residue protein sequence, read N- to C-terminus: LL-diaminopimelate aminotransferase (409 aa).

The substrate site is built by tyrosine 15 and glycine 42. Residues tyrosine 72, 108–109 (SK), tyrosine 132, asparagine 187, tyrosine 218, and 246–248 (SFS) contribute to the pyridoxal 5'-phosphate site. Residues lysine 109, tyrosine 132, and asparagine 187 each contribute to the substrate site. Lysine 249 carries the N6-(pyridoxal phosphate)lysine modification. Positions 257 and 292 each coordinate pyridoxal 5'-phosphate. Positions 292 and 388 each coordinate substrate.

This sequence belongs to the class-I pyridoxal-phosphate-dependent aminotransferase family. LL-diaminopimelate aminotransferase subfamily. In terms of assembly, homodimer. Requires pyridoxal 5'-phosphate as cofactor.

The catalysed reaction is (2S,6S)-2,6-diaminopimelate + 2-oxoglutarate = (S)-2,3,4,5-tetrahydrodipicolinate + L-glutamate + H2O + H(+). The protein operates within amino-acid biosynthesis; L-lysine biosynthesis via DAP pathway; LL-2,6-diaminopimelate from (S)-tetrahydrodipicolinate (aminotransferase route): step 1/1. In terms of biological role, involved in the synthesis of meso-diaminopimelate (m-DAP or DL-DAP), required for both lysine and peptidoglycan biosynthesis. Catalyzes the direct conversion of tetrahydrodipicolinate to LL-diaminopimelate. This chain is LL-diaminopimelate aminotransferase, found in Acaryochloris marina (strain MBIC 11017).